Here is a 301-residue protein sequence, read N- to C-terminus: Probable alpha-L-glutamate ligase (301 aa).

The ATP-grasp domain occupies 104–287 (LQLLSRRGVG…VAGLIIQYLE (184 aa)). Residues K141, 178–179 (EY), D187, and 211–213 (RSN) contribute to the ATP site. D248, E260, and N262 together coordinate Mg(2+). D248, E260, and N262 together coordinate Mn(2+).

The protein belongs to the RimK family. The cofactor is Mg(2+). Requires Mn(2+) as cofactor.

The chain is Probable alpha-L-glutamate ligase from Stutzerimonas stutzeri (strain A1501) (Pseudomonas stutzeri).